A 165-amino-acid chain; its full sequence is MISVATAECFTHGKIGIKIHKMACGYRELEKDPNYGIINGNVFVMASMFLPSKKGIESILNVKLPEPDYVFKYSKAYTQENDILVAKMVANALKNKLKCNIAISSTAGVGKGAVCILTDNNEYVFTSDVYGDLIKGENILKRQTNGLNKSFDTFVEILKKEYGLK.

Belongs to the UPF0254 family.

The polypeptide is UPF0254 protein MmarC5_0742 (Methanococcus maripaludis (strain C5 / ATCC BAA-1333)).